The primary structure comprises 488 residues: Dipeptidase 3 (488 aa).

The signal sequence occupies residues 1 to 35 (MQPTGPEGPRALSLRPLGHRLSLLGVLLIIPSLWV). The span at 41 to 60 (TPSLSSAPTSPGASSAMTTP) shows a compositional bias: low complexity. The interval 41–74 (TPSLSSAPTSPGASSAMTTPGIPNDTTTSGVTSD) is disordered. Cystine bridges form between Cys143/Cys222 and Cys294/Cys326. A glycan (N-linked (GlcNAc...) asparagine) is linked at Asn331. Ser459 carries the GPI-anchor amidated serine lipid modification. Positions 460–487 (KAPPCPLLGLVAAVTSPAFTLWLCCSGH) are cleaved as a propeptide — removed in mature form.

It belongs to the metallo-dependent hydrolases superfamily. Peptidase M19 family. Homodimer; disulfide-linked. Interacts with TEX101; co-localized on the cell surface of spermatocytes, spermatids, and testicular spermatozoa, co-localized only in cytoplasmic droplets of caput and corpus epididymal sperm.

The protein localises to the membrane. Its function is as follows. Lacks dipeptidase activity and is unable to hydrolyze cystinyl-bis-glycine, leukotriene D4 and the beta-lactam antibiotic imipenem. The absence of activity may be due to the inability of serine (instead of aspartate found in DPEP1/2) at position 356 to function as the acid/base catalyst and activate the nucleophilic water/hydroxide. This is Dipeptidase 3 (Dpep3) from Rattus norvegicus (Rat).